We begin with the raw amino-acid sequence, 215 residues long: Large ribosomal subunit protein eL14 (215 aa).

K79 bears the N6-acetyllysine mark. An N6-acetyllysine; alternate modification is found at K85. At K85 the chain carries N6-succinyllysine; alternate. Residue K124 forms a Glycyl lysine isopeptide (Lys-Gly) (interchain with G-Cter in SUMO2) linkage. S139 is subject to Phosphoserine. Residues V161 to A215 form a disordered region. A run of 6 repeats spans residues K171–A175, Q176–A180, Q181–G185, Q186–P190, K193–Q195, and K196–Q198. The segment at K171–P190 is 4 X 5 AA tandem repeats of Q-K-A-[PAS]-X. The tract at residues K193–Q198 is 2 X 3 AA tandem repeats of K-[GA]-Q. K204 is modified (N6-succinyllysine).

Belongs to the eukaryotic ribosomal protein eL14 family. Component of the large ribosomal subunit.

Its subcellular location is the cytoplasm. Functionally, component of the large ribosomal subunit. The ribosome is a large ribonucleoprotein complex responsible for the synthesis of proteins in the cell. This Homo sapiens (Human) protein is Large ribosomal subunit protein eL14 (RPL14).